Consider the following 445-residue polypeptide: Aminopeptidase S (445 aa).

Residues Met-1–Ala-45 form the signal peptide. The Ca(2+) site is built by Asp-48 and Ile-49. Zn(2+) is bound by residues His-130 and Asp-142. Residue Glu-176 is the Proton acceptor of the active site. 3 residues coordinate Zn(2+): Glu-177, Asp-205, and His-292. A disulfide bridge connects residues Cys-290 and Cys-295. Residues Asp-307 and Asp-311 each contribute to the Ca(2+) site. A P/Homo B domain is found at Gly-325–Phe-445. Residues Gly-330–Phe-445 constitute a propeptide, removed in mature form.

This sequence belongs to the peptidase M28 family. M28A subfamily. Monomer. It depends on Ca(2+) as a cofactor. The cofactor is Zn(2+). Mn(2+) serves as cofactor. Co(2+) is required as a cofactor.

The protein localises to the secreted. It carries out the reaction Release of an N-terminal amino acid with a preference for large hydrophobic amino-terminus residues.. Calcium activates the enzyme, inhibited by 1,10-phenanthroline, EDTA and EGTA. End-product inhibited by L-amino acids. Non-competitively inhibited by NaF and NaH(2)PO(4). In terms of biological role, an exopeptidase specific for larger hydrophobic amino acids (especially leucine), no cleavage occurs if the next residue is proline. The polypeptide is Aminopeptidase S (Streptomyces griseus subsp. griseus (strain JCM 4626 / CBS 651.72 / NBRC 13350 / KCC S-0626 / ISP 5235)).